A 122-amino-acid polypeptide reads, in one-letter code: Large ribosomal subunit protein uL22 (122 aa).

The interval 102-122 (VAEGKEMKSSKSHKKNQAEGK) is disordered.

This sequence belongs to the universal ribosomal protein uL22 family. Part of the 50S ribosomal subunit.

In terms of biological role, this protein binds specifically to 23S rRNA; its binding is stimulated by other ribosomal proteins, e.g. L4, L17, and L20. It is important during the early stages of 50S assembly. It makes multiple contacts with different domains of the 23S rRNA in the assembled 50S subunit and ribosome. Its function is as follows. The globular domain of the protein is located near the polypeptide exit tunnel on the outside of the subunit, while an extended beta-hairpin is found that lines the wall of the exit tunnel in the center of the 70S ribosome. The chain is Large ribosomal subunit protein uL22 from Helicobacter pylori (strain HPAG1).